The primary structure comprises 257 residues: RLA class II histocompatibility antigen, DP beta chain (257 aa).

The signal sequence occupies residues 1 to 29 (MRPCRSLRTAALAVVLTVLLHPVALGRAT). The beta-1 stretch occupies residues 30-120 (PGESEQNYLW…LFQGLPVLLQ (91 aa)). Over 30–224 (PGESEQNYLW…KAQSDSARSK (195 aa)) the chain is Extracellular. 2 cysteine pairs are disulfide-bonded: Cys45–Cys105 and Cys143–Cys199. A glycan (N-linked (GlcNAc...) asparagine) is linked at Asn49. The beta-2 stretch occupies residues 121 to 214 (TQPRVSVSPS…SLDSPITVEW (94 aa)). Positions 123 to 211 (PRVSVSPSKK…EHPSLDSPIT (89 aa)) constitute an Ig-like C1-type domain. The segment at 215 to 224 (KAQSDSARSK) is connecting peptide. Residues 225-245 (MLAGVGGLVLGLVSLAVGVFM) form a helical membrane-spanning segment. The Cytoplasmic portion of the chain corresponds to 246-257 (HRRSKKAQQGCR).

This sequence belongs to the MHC class II family.

It localises to the membrane. The protein is RLA class II histocompatibility antigen, DP beta chain of Oryctolagus cuniculus (Rabbit).